The chain runs to 592 residues: Aspartate--tRNA ligase (592 aa).

Glu171 contributes to the L-aspartate binding site. Residues 195 to 198 (QLFK) are aspartate. Arg217 is an L-aspartate binding site. ATP-binding positions include 217–219 (RDE) and Gln226. His448 contributes to the L-aspartate binding site. An ATP-binding site is contributed by Glu482. Arg489 is an L-aspartate binding site. ATP is bound at residue 534–537 (GLDR).

This sequence belongs to the class-II aminoacyl-tRNA synthetase family. Type 1 subfamily. Homodimer.

It is found in the cytoplasm. The catalysed reaction is tRNA(Asp) + L-aspartate + ATP = L-aspartyl-tRNA(Asp) + AMP + diphosphate. In terms of biological role, catalyzes the attachment of L-aspartate to tRNA(Asp) in a two-step reaction: L-aspartate is first activated by ATP to form Asp-AMP and then transferred to the acceptor end of tRNA(Asp). The protein is Aspartate--tRNA ligase of Vibrio parahaemolyticus serotype O3:K6 (strain RIMD 2210633).